A 103-amino-acid chain; its full sequence is Co-chaperonin GroES (103 aa).

Belongs to the GroES chaperonin family. In terms of assembly, heptamer of 7 subunits arranged in a ring. Interacts with the chaperonin GroEL.

Its subcellular location is the cytoplasm. Functionally, together with the chaperonin GroEL, plays an essential role in assisting protein folding. The GroEL-GroES system forms a nano-cage that allows encapsulation of the non-native substrate proteins and provides a physical environment optimized to promote and accelerate protein folding. GroES binds to the apical surface of the GroEL ring, thereby capping the opening of the GroEL channel. The chain is Co-chaperonin GroES from Prochlorococcus marinus (strain MIT 9211).